Here is a 151-residue protein sequence, read N- to C-terminus: MKQIELKILDARIGNEFPLPEYATPGSAGLDLRACLDAAVVLAPGETQLIPTGLAIHIADPGLCATILPRSGLGHKHGIVLGNLVGLIDSDYQGQLMVSVWNRGNTTFTIQPGERIAQLVFMPVVQASFNIVDDFDTSERGEGGFGSSGRH.

Substrate-binding positions include 70 to 72 (RSG), asparagine 83, 87 to 89 (LID), and methionine 97.

Belongs to the dUTPase family. Mg(2+) serves as cofactor.

It catalyses the reaction dUTP + H2O = dUMP + diphosphate + H(+). It functions in the pathway pyrimidine metabolism; dUMP biosynthesis; dUMP from dCTP (dUTP route): step 2/2. Its function is as follows. This enzyme is involved in nucleotide metabolism: it produces dUMP, the immediate precursor of thymidine nucleotides and it decreases the intracellular concentration of dUTP so that uracil cannot be incorporated into DNA. This is Deoxyuridine 5'-triphosphate nucleotidohydrolase from Tolumonas auensis (strain DSM 9187 / NBRC 110442 / TA 4).